Reading from the N-terminus, the 327-residue chain is MTHSCRLSVAPMLDWTDRHCRYFHRLLSAQTLLYTEMVTTGAIIHGRGDFLAYNQEEHPVALQFGGSNPKDLAHCAKLAQERGYDEINLNVGCPSDRVQNGRFGACLMGEPDLVAECVAAMRAVVDIPVTVKTRIGIDDQDSYEFLTQFIATVAEKGGCEQFTIHARKAWLSGLSPKENREIPPLDYPRAYQIKRDFPHLTIAVNGGVKSLEEAKLHLQHLDGVMIGREAYQNPYLLAEVDQQIFGLETPVKKRSQVIHEMMPYIERELSQGTHLGHMTRHMLGLFQNMPGARQWRRHISENAHKPGAGLEVVEQALAKIPYQELGV.

FMN contacts are provided by residues 11–13 and Gln63; that span reads PML. The Proton donor role is filled by Cys93. FMN is bound by residues Lys132, His165, 205–207, and 227–228; these read NGG and GR.

It belongs to the Dus family. DusA subfamily. The cofactor is FMN.

It catalyses the reaction 5,6-dihydrouridine(20) in tRNA + NADP(+) = uridine(20) in tRNA + NADPH + H(+). It carries out the reaction 5,6-dihydrouridine(20) in tRNA + NAD(+) = uridine(20) in tRNA + NADH + H(+). The catalysed reaction is 5,6-dihydrouridine(20a) in tRNA + NADP(+) = uridine(20a) in tRNA + NADPH + H(+). The enzyme catalyses 5,6-dihydrouridine(20a) in tRNA + NAD(+) = uridine(20a) in tRNA + NADH + H(+). Its function is as follows. Catalyzes the synthesis of 5,6-dihydrouridine (D), a modified base found in the D-loop of most tRNAs, via the reduction of the C5-C6 double bond in target uridines. Specifically modifies U20 and U20a in tRNAs. This is tRNA-dihydrouridine(20/20a) synthase from Vibrio cholerae serotype O1 (strain ATCC 39315 / El Tor Inaba N16961).